The sequence spans 203 residues: Urease accessory protein UreG (203 aa).

Residue 12-19 (GPVGSGKT) participates in GTP binding.

This sequence belongs to the SIMIBI class G3E GTPase family. UreG subfamily. As to quaternary structure, homodimer. UreD, UreF and UreG form a complex that acts as a GTP-hydrolysis-dependent molecular chaperone, activating the urease apoprotein by helping to assemble the nickel containing metallocenter of UreC. The UreE protein probably delivers the nickel.

It is found in the cytoplasm. In terms of biological role, facilitates the functional incorporation of the urease nickel metallocenter. This process requires GTP hydrolysis, probably effectuated by UreG. The protein is Urease accessory protein UreG of Alteromonas mediterranea (strain DSM 17117 / CIP 110805 / LMG 28347 / Deep ecotype).